A 496-amino-acid polypeptide reads, in one-letter code: Fascin (496 aa).

It belongs to the fascin family.

The protein resides in the cytoplasm. The protein localises to the cytoskeleton. Its function is as follows. Acts as an actin bundling protein. The sequence is that of Fascin from Strongylocentrotus purpuratus (Purple sea urchin).